We begin with the raw amino-acid sequence, 625 residues long: Glucose dehydrogenase [FAD, quinone] (625 aa).

Positions 1 to 42 (MATSPSSCDCLVGVPTGPTLASTCGGSAFMLFMGLLEVFIRS) are cleaved as a signal peptide. 66 to 95 (DFIVIGGGSAGSVVASRLSEVPQWKVLLIE) contacts FAD. The active-site Proton acceptor is the H544. U613 is a non-standard amino acid (selenocysteine).

It belongs to the GMC oxidoreductase family. FAD is required as a cofactor.

The protein resides in the secreted. The enzyme catalyses a quinone + D-glucose = D-glucono-1,5-lactone + a quinol. This is Glucose dehydrogenase [FAD, quinone] (Gld) from Drosophila pseudoobscura pseudoobscura (Fruit fly).